Consider the following 524-residue polypeptide: Adhesion G-protein coupled receptor G5 (524 aa).

A signal peptide spans 1–23 (MDPHGALFFYLCLLAAQVVLVET). Residues 24–246 (LSDLLVLMKR…PAELQVPLEY (223 aa)) are Extracellular-facing. 6 N-linked (GlcNAc...) asparagine glycosylation sites follow: N58, N65, N96, N143, N169, and N175. The region spanning 74 to 235 (QSLVFKLSCD…AVLMQLSGDP (162 aa)) is the GAIN-B domain. Intrachain disulfides connect C185–C217 and C205–C219. The tract at residues 185-235 (CVFWKEGASKSSWGAWSPEGCYTEQPSATQVLCHCNHLTYFAVLMQLSGDP) is GPS. Residues 224 to 232 (YFAVLMQLS) are stachel. Residues 247-267 (ISFVGCSISIVASLLTILLYA) form a helical membrane-spanning segment. Over 268-284 (QSRKQSDSTTRIHMNLN) the chain is Cytoplasmic. Residues 285–305 (GSVLLLNVTFLLSSQMTLPTM) traverse the membrane as a helical segment. At 306–319 (PRPVCKVLAAVLHY) the chain is on the extracellular side. C310 and C400 are joined by a disulfide. The chain crosses the membrane as a helical span at residues 320–340 (ALLSSLTWMAIEGFNLYLFLG). Topologically, residues 341 to 351 (RVYNAYIRRYL) are cytoplasmic. Residues 352–372 (LKLCMLGWGFPALLVLLLLMI) traverse the membrane as a helical segment. Topologically, residues 373–413 (KSSVYGPCVTSLSKSQENGTGFQNVSMCWIRSPMVHSILVM) are extracellular. N-linked (GlcNAc...) asparagine glycosylation is found at N390 and N396. A helical membrane pass occupies residues 414–434 (GYGGFTSLFNLVVLAWALWIL). The Cytoplasmic portion of the chain corresponds to 435 to 453 (CRLRAREKALSPWAYRDTA). Residues 454–476 (MVLGLTVLLGTTWTLAFFSFGVF) traverse the membrane as a helical segment. Residues 477–480 (LLPQ) lie on the Extracellular side of the membrane. Residues 481–500 (LFLFTIFNSLYGFFLFLWFC) form a helical membrane-spanning segment. Residues 501 to 524 (SQKRYSDAEAKAEMEAVSSSQMTH) are Cytoplasmic-facing.

This sequence belongs to the G-protein coupled receptor 2 family. Adhesion G-protein coupled receptor (ADGR) subfamily. Heterodimer of 2 chains generated by proteolytic processing; the large extracellular N-terminal fragment and the membrane-bound C-terminal fragment predominantly remain associated and non-covalently linked. Autoproteolytically processed at the GPS region of the GAIN-B domain; this cleavage modulates receptor activity. In terms of tissue distribution, expressed at least in kidney, heart, brain and spleen. As to expression, isoform 1 is predominant in spleen. In the kidney, both isoform 1 and isoform 2 are expressed at similar levels. Isoform 2 is the major form in heart and brain. In the kidney, both isoform 1 and isoform 2 are expressed at similar levels.

Its subcellular location is the cell membrane. Forms a heterodimer of 2 chains generated by proteolytic processing that remain associated through non-covalent interactions mediated by the GAIN-B domain. In the inactivated receptor, the Stachel sequence (also named stalk) is embedded in the GAIN-B domain, where it adopts a beta-strand conformation. On activation, the Stachel moves into the 7 transmembrane region and adopts a twisted hook-shaped configuration that forms contacts within the receptor, leading to coupling of a G-alpha protein, which activates signaling. The cleaved GAIN-B and N-terminal domains can then dissociate from the rest of the receptor. Its function is as follows. Orphan adhesion G-protein coupled receptor (aGPCR). Ligand binding causes a conformation change that triggers signaling via guanine nucleotide-binding proteins (G proteins) and modulates the activity of downstream effectors, such as adenylate cyclase. ADGRG5 is specifically coupled to G(s) G proteins and mediates activation of adenylate cyclase activity. In terms of biological role, isoform 1, but not isoform 2, is constitutively active, as evidenced by elevated basal cAMP levels, and responds to mechanical activation (shaking). This Mus musculus (Mouse) protein is Adhesion G-protein coupled receptor G5.